An 895-amino-acid polypeptide reads, in one-letter code: Probable methyltransferase PMT27 (895 aa).

The Cytoplasmic segment spans residues 1–16 (MAFGRGRGNKRTSTSS). A helical; Signal-anchor for type II membrane protein membrane pass occupies residues 17-37 (YASTITMVIFVALCVFGVWML). The Lumenal portion of the chain corresponds to 38-895 (SSNSVIPPQI…KGFWRPETSQ (858 aa)). Polar residues predominate over residues 43–52 (IPPQITQGST). The disordered stretch occupies residues 43-362 (IPPQITQGST…QRQTSESNTV (320 aa)). Positions 90–114 (NPGKLPDDAVKSEDEQRKSAKEKSE) are enriched in basic and acidic residues. Low complexity predominate over residues 115–127 (TTSSKTQTQETQQ). Basic and acidic residues predominate over residues 129–143 (NDDKISEEKEKDNGK). Asn-145 is a glycosylation site (N-linked (GlcNAc...) asparagine). The segment covering 154–174 (GQMKKVVKEFEKEQKQQRDED) has biased composition (basic and acidic residues). Over residues 176–191 (GTQPKGTQGQEQGQGK) the composition is skewed to low complexity. Composition is skewed to polar residues over residues 199 to 232 (GNKQ…GETS) and 243 to 256 (PEEQ…TGQQ). Positions 257-320 (NEEKTTASEE…RKDEKKHEQG (64 aa)) are enriched in basic and acidic residues. Residues 337-346 (SQKSWKSQAT) are compositionally biased toward polar residues. 2 N-linked (GlcNAc...) asparagine glycosylation sites follow: Asn-375 and Asn-709.

This sequence belongs to the methyltransferase superfamily.

It localises to the endoplasmic reticulum membrane. The polypeptide is Probable methyltransferase PMT27 (Arabidopsis thaliana (Mouse-ear cress)).